Reading from the N-terminus, the 365-residue chain is 3-dehydroquinate synthase (365 aa).

NAD(+)-binding positions include D69–K74, G103–D107, T127–T128, K140, K149, and T167–T170. Zn(2+)-binding residues include E182, H245, and H262.

The protein belongs to the sugar phosphate cyclases superfamily. Dehydroquinate synthase family. Co(2+) serves as cofactor. Requires Zn(2+) as cofactor. NAD(+) is required as a cofactor.

Its subcellular location is the cytoplasm. It catalyses the reaction 7-phospho-2-dehydro-3-deoxy-D-arabino-heptonate = 3-dehydroquinate + phosphate. It participates in metabolic intermediate biosynthesis; chorismate biosynthesis; chorismate from D-erythrose 4-phosphate and phosphoenolpyruvate: step 2/7. Its function is as follows. Catalyzes the conversion of 3-deoxy-D-arabino-heptulosonate 7-phosphate (DAHP) to dehydroquinate (DHQ). In Pseudomonas putida (strain W619), this protein is 3-dehydroquinate synthase.